The primary structure comprises 883 residues: Phosphoenolpyruvate carboxylase (883 aa).

Catalysis depends on residues His138 and Lys546.

The protein belongs to the PEPCase type 1 family. Homotetramer. Requires Mg(2+) as cofactor.

It carries out the reaction oxaloacetate + phosphate = phosphoenolpyruvate + hydrogencarbonate. Its activity is regulated as follows. The enzyme has distinct binding sites for each of the allosteric effectors such as acetyl-CoA, fructose 1,6-bisphosphate, guanosine 3'-diphosphate 5'-diphosphate, long chain fatty acids, and L-aspartate. In terms of biological role, forms oxaloacetate, a four-carbon dicarboxylic acid source for the tricarboxylic acid cycle. This Escherichia coli O157:H7 protein is Phosphoenolpyruvate carboxylase.